The chain runs to 73 residues: Translation initiation factor IF-1 (73 aa).

Residues 1–72 (MAKEDAIEVE…NRGRITYRSK (72 aa)) form the S1-like domain.

Belongs to the IF-1 family. Component of the 30S ribosomal translation pre-initiation complex which assembles on the 30S ribosome in the order IF-2 and IF-3, IF-1 and N-formylmethionyl-tRNA(fMet); mRNA recruitment can occur at any time during PIC assembly.

The protein resides in the cytoplasm. One of the essential components for the initiation of protein synthesis. Stabilizes the binding of IF-2 and IF-3 on the 30S subunit to which N-formylmethionyl-tRNA(fMet) subsequently binds. Helps modulate mRNA selection, yielding the 30S pre-initiation complex (PIC). Upon addition of the 50S ribosomal subunit IF-1, IF-2 and IF-3 are released leaving the mature 70S translation initiation complex. This is Translation initiation factor IF-1 from Syntrophobacter fumaroxidans (strain DSM 10017 / MPOB).